The following is a 908-amino-acid chain: DNA polymerase I (908 aa).

The region spanning 1–318 (MKELYLIDAL…DDINTIDTEN (318 aa)) is the 5'-3' exonuclease domain. The 213-residue stretch at 319 to 531 (VKYRSITTKI…MEENGIYLDK (213 aa)) folds into the 3'-5' exonuclease domain. The tract at residues 532 to 908 (EYLKEYGKEL…ETGKSWGEIH (377 aa)) is polymerase.

Belongs to the DNA polymerase type-A family.

The catalysed reaction is DNA(n) + a 2'-deoxyribonucleoside 5'-triphosphate = DNA(n+1) + diphosphate. In addition to polymerase activity, this DNA polymerase exhibits 3'-5' and 5'-3' exonuclease activity. This chain is DNA polymerase I (polA), found in Borreliella burgdorferi (strain ATCC 35210 / DSM 4680 / CIP 102532 / B31) (Borrelia burgdorferi).